The chain runs to 360 residues: Putative mRNA-decapping protein (360 aa).

Residues 11 to 28 (HICSNCGRSGHEFRNCIE) form a CCHC-type zinc finger. The Nudix hydrolase domain maps to 163 to 347 (YKYDNILYHF…KKRILTRVYL (185 aa)). The Nudix box signature appears at 242–264 (GRRDKRSEENMVCACREFEEETG). Glu249 serves as a coordination point for Mg(2+). Glu258 serves as the catalytic Nucleophile. A Mg(2+)-binding site is contributed by Glu262.

This sequence belongs to the Nudix hydrolase family. DIPP subfamily. Mg(2+) serves as cofactor. Mn(2+) is required as a cofactor.

The catalysed reaction is diphospho-myo-inositol polyphosphate + H2O = myo-inositol polyphosphate + phosphate.. Its function is as follows. Might function as a decapping enzyme required for the removal of the 5'-end m7GpppN cap tethered to viral and host mRNAs to allow their decay in cells. In addition to the mRNA cap, probably also efficiently hydrolyzes diphosphoinositol polyphosphates. The protein is Putative mRNA-decapping protein of Acanthamoeba polyphaga (Amoeba).